A 424-amino-acid chain; its full sequence is Histidine--tRNA ligase (424 aa).

Belongs to the class-II aminoacyl-tRNA synthetase family. Homodimer.

Its subcellular location is the cytoplasm. It carries out the reaction tRNA(His) + L-histidine + ATP = L-histidyl-tRNA(His) + AMP + diphosphate + H(+). The protein is Histidine--tRNA ligase of Shewanella amazonensis (strain ATCC BAA-1098 / SB2B).